Reading from the N-terminus, the 210-residue chain is 3-hexulose-6-phosphate synthase (210 aa).

The protein belongs to the HPS/KGPDC family. HPS subfamily.

The catalysed reaction is D-ribulose 5-phosphate + formaldehyde = D-arabino-hex-3-ulose 6-phosphate. The protein operates within one-carbon metabolism; formaldehyde assimilation via RuMP pathway; D-fructose 6-phosphate from D-ribulose 5-phosphate and formaldehyde: step 1/2. In terms of biological role, catalyzes the condensation of ribulose 5-phosphate with formaldehyde to form 3-hexulose 6-phosphate. Together with HxlB, may act as a formaldehyde detoxification system. This is 3-hexulose-6-phosphate synthase (hxlA) from Bacillus subtilis (strain 168).